The following is an 804-amino-acid chain: Protein translocase subunit SecA (804 aa).

ATP contacts are provided by residues Q87, 105–109 (GEGKT), and D500.

Belongs to the SecA family. In terms of assembly, monomer and homodimer. Part of the essential Sec protein translocation apparatus which comprises SecA, SecYEG and auxiliary proteins SecDF-YajC and YidC.

The protein localises to the cell inner membrane. It is found in the cytoplasm. The enzyme catalyses ATP + H2O + cellular proteinSide 1 = ADP + phosphate + cellular proteinSide 2.. In terms of biological role, part of the Sec protein translocase complex. Interacts with the SecYEG preprotein conducting channel. Has a central role in coupling the hydrolysis of ATP to the transfer of proteins into and across the cell membrane, serving both as a receptor for the preprotein-SecB complex and as an ATP-driven molecular motor driving the stepwise translocation of polypeptide chains across the membrane. In Neorickettsia sennetsu (strain ATCC VR-367 / Miyayama) (Ehrlichia sennetsu), this protein is Protein translocase subunit SecA.